The primary structure comprises 314 residues: Glutathione synthetase (314 aa).

The ATP-grasp domain maps to 125–311 (EKIAAQLFPQ…IAGQLFDAIE (187 aa)). 151–208 (FVQKQEQAILKPLDGMGGHSIFRSSNGDPNLNVILETLTDGGRTLAIAQRYLQQIIEG) lines the ATP pocket. 2 residues coordinate Mg(2+): E282 and N284.

Belongs to the prokaryotic GSH synthase family. Mg(2+) serves as cofactor. It depends on Mn(2+) as a cofactor.

It catalyses the reaction gamma-L-glutamyl-L-cysteine + glycine + ATP = glutathione + ADP + phosphate + H(+). It participates in sulfur metabolism; glutathione biosynthesis; glutathione from L-cysteine and L-glutamate: step 2/2. The polypeptide is Glutathione synthetase (Xylella fastidiosa (strain Temecula1 / ATCC 700964)).